The following is an 880-amino-acid chain: Zinc-responsive transcriptional regulator ZAP1 (880 aa).

Disordered regions lie at residues 1-26 and 140-164; these read MDAL…AASA and NNFH…PRRK. Over residues 17–26 the composition is skewed to low complexity; the sequence is ATSAATAASA. Positions 147 to 158 are enriched in polar residues; sequence SDPTSPQQNSKS. Phosphoserine is present on residues serine 156 and serine 166. Positions 182–502 are zinc-responsive domain 1 (ZRD(AD1)); it reads KPNPPPGSDD…LTNNDLNDLI (321 aa). The segment at 207–402 is transcription activation domain 1 (AD1); sequence HPKSEANIKQ…YEVPFGKHIN (196 aa). Disordered regions lie at residues 436–482 and 510–555; these read NRCN…VNNS and RFRN…PSSI. Residues 442-456 show a composition bias toward low complexity; that stretch reads NNLNGSNNNTAGATS. The span at 460–474 shows a compositional bias: basic residues; the sequence is QHHHHRIQFHSHKPN. Serine 515 bears the Phosphoserine mark. Over residues 545–555 the composition is skewed to low complexity; the sequence is SSLEDSLPSSI. The C2H2-type 1 zinc-finger motif lies at 579–604; it reads LKCKWKECPESCSSLFDLQRHLLKDH. Residues 579–641 are zinc-responsive domain 2 (ZRD(AD2)); the sequence is LKCKWKECPE…SIVNHINCQH (63 aa). Zn(2+)-binding residues include cysteine 581, cysteine 586, histidine 599, histidine 604, cysteine 618, cysteine 623, histidine 636, and histidine 641. The tract at residues 611 to 640 is transcription activation domain 2 (AD2); that stretch reads HPMEPLACNWEDCDFLGDDTCSIVNHINCQ. Residues 616 to 641 form a C2H2-type 2; atypical zinc finger; the sequence is LACNWEDCDFLGDDTCSIVNHINCQH. C2H2-type zinc fingers lie at residues 705-730, 738-762, 768-790, 796-818, and 824-846; these read VICQ…EAVH, YQCL…LKVH, YKCK…TRTH, YKCH…IRTH, and LQCK…IKTH. A DNA-binding region (DNA-binding domain) is located at residues 705-846; sequence VICQWDGCNK…SNLSKHIKTH (142 aa).

It localises to the nucleus. Active in zinc-limited cells and repressed in replete cells. Zinc controls ZAP1 DNA binding activity. In terms of biological role, transcription regulator controlling zinc-responsive gene expression. Binds to zinc-responsive elements (ZREs) (consensus sequence 5'-ACCYYNAAGGT-3') in the promoter of target genes. Recruits SWI/SNF, SAGA, and Mediator complexes as coactivators in a zinc-responsive manner. Involved in zinc ion homeostasis by zinc-responsive transcriptional regulation of the zinc uptake system genes ZTR1 and ZTR2. Positively regulates ETR1 expression, affecting mitochondrial function. The sequence is that of Zinc-responsive transcriptional regulator ZAP1 (ZAP1) from Saccharomyces cerevisiae (strain ATCC 204508 / S288c) (Baker's yeast).